Reading from the N-terminus, the 256-residue chain is Phosphoribosylaminoimidazole-succinocarboxamide synthase (256 aa).

It belongs to the SAICAR synthetase family.

It catalyses the reaction 5-amino-1-(5-phospho-D-ribosyl)imidazole-4-carboxylate + L-aspartate + ATP = (2S)-2-[5-amino-1-(5-phospho-beta-D-ribosyl)imidazole-4-carboxamido]succinate + ADP + phosphate + 2 H(+). It functions in the pathway purine metabolism; IMP biosynthesis via de novo pathway; 5-amino-1-(5-phospho-D-ribosyl)imidazole-4-carboxamide from 5-amino-1-(5-phospho-D-ribosyl)imidazole-4-carboxylate: step 1/2. The sequence is that of Phosphoribosylaminoimidazole-succinocarboxamide synthase from Synechococcus sp. (strain JA-3-3Ab) (Cyanobacteria bacterium Yellowstone A-Prime).